The sequence spans 93 residues: Small ribosomal subunit protein uS19 (93 aa).

The protein belongs to the universal ribosomal protein uS19 family.

Functionally, protein S19 forms a complex with S13 that binds strongly to the 16S ribosomal RNA. This Brevibacillus brevis (strain 47 / JCM 6285 / NBRC 100599) protein is Small ribosomal subunit protein uS19.